The sequence spans 295 residues: Acetylglutamate kinase (295 aa).

Substrate-binding positions include Gly-66–Gly-67, Arg-88, and Asn-193.

It belongs to the acetylglutamate kinase family. ArgB subfamily.

It localises to the cytoplasm. The catalysed reaction is N-acetyl-L-glutamate + ATP = N-acetyl-L-glutamyl 5-phosphate + ADP. It functions in the pathway amino-acid biosynthesis; L-arginine biosynthesis; N(2)-acetyl-L-ornithine from L-glutamate: step 2/4. Its function is as follows. Catalyzes the ATP-dependent phosphorylation of N-acetyl-L-glutamate. The chain is Acetylglutamate kinase from Gluconobacter oxydans (strain 621H) (Gluconobacter suboxydans).